The following is a 613-amino-acid chain: Phosphoinositide phospholipase C 6 (613 aa).

In terms of domain architecture, PI-PLC X-box spans 137–281 (QDMTAPLSHY…LLHRIIISTK (145 aa)). Catalysis depends on residues H152 and H198. A disordered region spans residues 288-349 (ESRNPIVKQK…ASEDQKPAYK (62 aa)). The PI-PLC Y-box domain occupies 349-465 (KRLITIHAGK…GYVKKPNFLM (117 aa)). The 130-residue stretch at 466 to 595 (KKGFHDEVFD…PGIRSVPLYD (130 aa)) folds into the C2 domain.

The cofactor is Ca(2+). Expressed in leaves, flowers and siliques, but not in roots.

It is found in the cell membrane. The enzyme catalyses a 1,2-diacyl-sn-glycero-3-phospho-(1D-myo-inositol-4,5-bisphosphate) + H2O = 1D-myo-inositol 1,4,5-trisphosphate + a 1,2-diacyl-sn-glycerol + H(+). In terms of biological role, the production of the second messenger molecules diacylglycerol (DAG) and inositol 1,4,5-trisphosphate (IP3) is mediated by activated phosphatidylinositol-specific phospholipase C enzymes. The sequence is that of Phosphoinositide phospholipase C 6 (PLC6) from Arabidopsis thaliana (Mouse-ear cress).